A 303-amino-acid polypeptide reads, in one-letter code: D-alanine--D-alanine ligase (303 aa).

In terms of domain architecture, ATP-grasp spans 104-300 (KLMWQAVGLP…FEKLVERVLE (197 aa)). 132-187 (IAKLGLPVFVKPSSEGSSVGVTKVKTVEQLLPAVEEALKFDSIVLVEAFLAGKEYS) is an ATP binding site. Mg(2+)-binding residues include aspartate 254, glutamate 267, and asparagine 269.

The protein belongs to the D-alanine--D-alanine ligase family. Requires Mg(2+) as cofactor. Mn(2+) is required as a cofactor.

The protein localises to the cytoplasm. It catalyses the reaction 2 D-alanine + ATP = D-alanyl-D-alanine + ADP + phosphate + H(+). It functions in the pathway cell wall biogenesis; peptidoglycan biosynthesis. Its function is as follows. Cell wall formation. The polypeptide is D-alanine--D-alanine ligase (Actinobacillus pleuropneumoniae serotype 5b (strain L20)).